A 215-amino-acid chain; its full sequence is Probable phosphoglycerate mutase GpmB (215 aa).

Residues 8–15 (RHGETEWN), 21–22 (QG), Arg58, 82–85 (ELDM), and 151–152 (GI) each bind substrate. Catalysis depends on His9, which acts as the Tele-phosphohistidine intermediate. Residue Glu82 is the Proton donor/acceptor of the active site.

The protein belongs to the phosphoglycerate mutase family. GpmB subfamily.

The enzyme catalyses (2R)-2-phosphoglycerate = (2R)-3-phosphoglycerate. The protein operates within carbohydrate degradation; glycolysis; pyruvate from D-glyceraldehyde 3-phosphate: step 3/5. This is Probable phosphoglycerate mutase GpmB from Proteus mirabilis (strain HI4320).